We begin with the raw amino-acid sequence, 445 residues long: Fibrinogen gamma chain (445 aa).

The signal sequence occupies residues Met1–Ala25. N-linked (GlcNAc...) asparagine glycosylation is present at Asn78. Residues Arg170 to Asn416 enclose the Fibrinogen C-terminal domain. Cysteines 179 and 208 form a disulfide. Residues Asp344, Asp346, and Gly350 each coordinate Ca(2+). A disulfide bridge connects residues Cys352 and Cys365. The segment at Thr400–Asp422 is gamma-chain polymerization, binding amino end of another fibrin alpha chain. Residue Gln424 forms an Isoglutamyl lysine isopeptide (Gln-Lys) (interchain with K-432) linkage. The tract at residues Gln424–Pro445 is disordered. A Phosphoserine modification is found at Ser431. Lys432 is covalently cross-linked (Isoglutamyl lysine isopeptide (Lys-Gln) (interchain with Q-424)). The segment covering Ser435 to Pro445 has biased composition (basic and acidic residues).

Heterohexamer; disulfide linked. Contains 2 sets of 3 non-identical chains (alpha, beta and gamma). The 2 heterotrimers are in head to head conformation with the N-termini in a small central domain. Conversion of fibrinogen to fibrin is triggered by thrombin, which cleaves fibrinopeptides A and B from alpha and beta chains, and thus exposes the N-terminal polymerization sites responsible for the formation of the soft clot. The soft clot is converted into the hard clot by factor XIIIA which catalyzes the epsilon-(gamma-glutamyl)lysine cross-linking between gamma chains (stronger) and between alpha chains (weaker) of different monomers.

It localises to the secreted. Together with fibrinogen alpha (FGA) and fibrinogen beta (FGB), polymerizes to form an insoluble fibrin matrix. Has a major function in hemostasis as one of the primary components of blood clots. In addition, functions during the early stages of wound repair to stabilize the lesion and guide cell migration during re-epithelialization. Was originally thought to be essential for platelet aggregation, based on in vitro studies using anticoagulated blood. However, subsequent studies have shown that it is not absolutely required for thrombus formation in vivo. Enhances expression of SELP in activated platelets via an ITGB3-dependent pathway. Maternal fibrinogen is essential for successful pregnancy. Fibrin deposition is also associated with infection, where it protects against IFNG-mediated hemorrhage. May also facilitate the antibacterial immune response via both innate and T-cell mediated pathways. This chain is Fibrinogen gamma chain (Fgg), found in Rattus norvegicus (Rat).